A 353-amino-acid polypeptide reads, in one-letter code: Nicotinate-nucleotide--dimethylbenzimidazole phosphoribosyltransferase (353 aa).

The active-site Proton acceptor is E318.

Belongs to the CobT family.

The enzyme catalyses 5,6-dimethylbenzimidazole + nicotinate beta-D-ribonucleotide = alpha-ribazole 5'-phosphate + nicotinate + H(+). It functions in the pathway nucleoside biosynthesis; alpha-ribazole biosynthesis; alpha-ribazole from 5,6-dimethylbenzimidazole: step 1/2. Catalyzes the synthesis of alpha-ribazole-5'-phosphate from nicotinate mononucleotide (NAMN) and 5,6-dimethylbenzimidazole (DMB). This is Nicotinate-nucleotide--dimethylbenzimidazole phosphoribosyltransferase from Desulforudis audaxviator (strain MP104C).